A 512-amino-acid polypeptide reads, in one-letter code: Glycerol kinase 1 (512 aa).

Thr18 contributes to the ADP binding site. Positions 18, 19, and 20 each coordinate ATP. Position 18 (Thr18) interacts with sn-glycerol 3-phosphate. ADP is bound at residue Arg22. 4 residues coordinate sn-glycerol 3-phosphate: Arg88, Glu89, Tyr140, and Asp255. 5 residues coordinate glycerol: Arg88, Glu89, Tyr140, Asp255, and Gln256. ADP-binding residues include Thr277 and Gly321. ATP-binding residues include Thr277, Gly321, Gln325, and Gly422. Residues Gly422 and Asn426 each coordinate ADP.

The protein belongs to the FGGY kinase family.

The enzyme catalyses glycerol + ATP = sn-glycerol 3-phosphate + ADP + H(+). The protein operates within polyol metabolism; glycerol degradation via glycerol kinase pathway; sn-glycerol 3-phosphate from glycerol: step 1/1. Its activity is regulated as follows. Inhibited by fructose 1,6-bisphosphate (FBP). In terms of biological role, key enzyme in the regulation of glycerol uptake and metabolism. Catalyzes the phosphorylation of glycerol to yield sn-glycerol 3-phosphate. The sequence is that of Glycerol kinase 1 from Streptomyces avermitilis (strain ATCC 31267 / DSM 46492 / JCM 5070 / NBRC 14893 / NCIMB 12804 / NRRL 8165 / MA-4680).